The sequence spans 590 residues: ATP-dependent lipid A-core flippase (590 aa).

6 consecutive transmembrane segments (helical) span residues 31-51, 74-94, 132-152, 159-179, 259-279, and 286-306; these read IFIAAILAMAVVAASEGVIPK, AILTGVALIRGVAQFASGYLL, AVIFEVNQVLSILTSVFITLV, VALLIYLFYTNWRLTLIVSVI, VTAFLAALALSVIITIAMIQA, and IGGFTGFVMAMLLLISPLKHL. Residues 33-315 enclose the ABC transmembrane type-1 domain; it reads IAAILAMAVV…LTDINQPLTR (283 aa). The 239-residue stretch at 347-585 folds into the ABC transporter domain; it reads LVFERVGFRY…NGLYAGLHRI (239 aa). Residue 381-388 coordinates ATP; sequence GPSGSGKT.

This sequence belongs to the ABC transporter superfamily. Lipid exporter (TC 3.A.1.106) family. As to quaternary structure, homodimer.

It localises to the cell inner membrane. The enzyme catalyses ATP + H2O + lipid A-core oligosaccharideSide 1 = ADP + phosphate + lipid A-core oligosaccharideSide 2.. Functionally, involved in lipopolysaccharide (LPS) biosynthesis. Translocates lipid A-core from the inner to the outer leaflet of the inner membrane. Transmembrane domains (TMD) form a pore in the inner membrane and the ATP-binding domain (NBD) is responsible for energy generation. The chain is ATP-dependent lipid A-core flippase from Cupriavidus pinatubonensis (strain JMP 134 / LMG 1197) (Cupriavidus necator (strain JMP 134)).